The primary structure comprises 185 residues: Ribosome-recycling factor (185 aa).

Belongs to the RRF family.

Its subcellular location is the cytoplasm. Its function is as follows. Responsible for the release of ribosomes from messenger RNA at the termination of protein biosynthesis. May increase the efficiency of translation by recycling ribosomes from one round of translation to another. In Ehrlichia ruminantium (strain Welgevonden), this protein is Ribosome-recycling factor.